The primary structure comprises 132 residues: Amicyanin (132 aa).

Residues 1–26 (MISAKTLRPAIAAIALFAIGATGAWA) form the signal peptide. Residue Gln27 is modified to Pyrrolidone carboxylic acid. A Plastocyanin-like domain is found at 27–132 (QDKITVTSEK…PFMRGKVIVE (106 aa)). The Cu cation site is built by His80, Cys119, His122, and Met125.

Cu cation is required as a cofactor.

The protein localises to the periplasm. It participates in one-carbon metabolism; methylamine degradation. Functionally, primary acceptor of electrons from methylamine dehydrogenase. Passes those electrons on either a soluble cytochrome c or to pseudoazurin. The chain is Amicyanin (mauC) from Paracoccus versutus (Thiobacillus versutus).